Consider the following 1137-residue polypeptide: Ribonucleoside-diphosphate reductase large subunit (1137 aa).

The segment at 1 to 32 (MASRPAASSPVEARAPVGGQEAGGPSAATQGE) is disordered. An RIP homotypic interaction motif (RHIM) motif is present at residues 64–84 (SYRISDNNFVQCGSNCTMIID). 2 disordered regions span residues 124–159 (GGTP…FTLG) and 173–315 (AVFG…YPVP). A compositionally biased stretch (polar residues) spans 131–141 (AGTSTGTQTAD). The segment covering 196 to 206 (SDSDDSEDTDS) has biased composition (acidic residues). Residues 281 to 290 (AGAGLAADPA) are compositionally biased toward low complexity. Residues 291–304 (VARDDAEGLSDPRP) show a composition bias toward basic and acidic residues. Residues threonine 566, 581 to 582 (SC), glycine 612, 791 to 795 (NLCTE), and 968 to 972 (PTAAS) contribute to the substrate site. Cysteines 582 and 808 form a disulfide. Catalysis depends on asparagine 791, which acts as the Proton acceptor. The active-site Cysteine radical intermediate is the cysteine 793. Catalysis depends on glutamate 795, which acts as the Proton acceptor.

Belongs to the ribonucleoside diphosphate reductase large chain family. In terms of assembly, heterotetramer composed of a homodimer of the large subunit (R1) and a homodimer of the small subunit (R2). Larger multisubunit protein complex are also active, composed of (R1)n(R2)n. Self-assembles (via RIP homotypic interaction motif/RHIM) into homomeric fibrillar amyloid structures. Interacts (via RHIM) with human RIPK1 (via RHIM). Interacts (via RHIM) with human RIPK3 (via RHIM); the interaction leads to heteromeric amyloid assemblies. Interacts (via RHIM) with human ZBP1 (via RHIM); the interaction leads to heteromeric amyloid assemblies. Interacts (via C-terminus) with host CASP8.

The enzyme catalyses a 2'-deoxyribonucleoside 5'-diphosphate + [thioredoxin]-disulfide + H2O = a ribonucleoside 5'-diphosphate + [thioredoxin]-dithiol. In terms of biological role, ribonucleoside-diphosphate reductase holoenzyme that provides the precursors necessary for viral DNA synthesis. Allows virus growth in non-dividing cells, as well as reactivation from latency in infected hosts. Catalyzes the biosynthesis of deoxyribonucleotides from the corresponding ribonucleotides. Prevents host necroptosis by targeting host RIPK1 and RIPK3, thereby hampering the formation of necroptotic RIPK1-RIPK3 complexes. Forms hetero-amyloid structures with host proteins RIPK3 or ZBP1 which may prevent RIPK3- and ZBP1-mediated necroptosis. In addition, inhibits extrinsic apoptosis by targeting host CASP8. The polypeptide is Ribonucleoside-diphosphate reductase large subunit (Human herpesvirus 1 (strain 17) (HHV-1)).